The sequence spans 366 residues: Palmitoyltransferase ZDHHC2 (366 aa).

At 1–15 (MAPSGPGGVRRRCRR) the chain is on the cytoplasmic side. A helical membrane pass occupies residues 16–36 (VLYWIPVVFISLLLGWSYYAY). The Lumenal portion of the chain corresponds to 37–47 (AIQLCIVSMEN). Residues 48–68 (IGEQVVCLMAYHLLFAMFVWS) traverse the membrane as a helical segment. Over 69–169 (YWKTIFTLPM…NNCVGFSNYK (101 aa)) the chain is Cytoplasmic. One can recognise a DHHC domain in the interval 126-176 (RYCDRCRLIKPDRCHHCSVCDKCILKMDHHCPWVNNCVGFSNYKFFLLFLA). Cysteine 156 (S-palmitoyl cysteine intermediate) is an active-site residue. Residues 170–190 (FFLLFLAYSLLYCLFIAATDL) form a helical membrane-spanning segment. Over 191 to 207 (QYFIRFWTNGLPDTQAK) the chain is Lumenal. Residues 208–228 (FHIMFLFFAAAMFSVSLSSLF) form a helical membrane-spanning segment. Residues 229-366 (GYHCWLVSKN…NPALTMENET (138 aa)) are Cytoplasmic-facing. Polar residues-rich tracts occupy residues 297-316 (VNQDPEQPSTPAGLNSTAKN) and 332-349 (SHLLTDSQTWTENSSNSG). The disordered stretch occupies residues 297-366 (VNQDPEQPST…NPALTMENET (70 aa)). Residues 298–366 (NQDPEQPSTP…NPALTMENET (69 aa)) are mediates localization to plasma membrane and recycling endosomes. The Non-canonical dileucine endocytic signal motif lies at 334–335 (LL). The NPxY-like endocytic signal motif lies at 357-360 (NPAL).

This sequence belongs to the DHHC palmitoyltransferase family. In terms of assembly, monomer. Homodimer. The monomeric form has a higher catalytic activity. In terms of processing, autopalmitoylated.

The protein resides in the postsynaptic density. Its subcellular location is the postsynaptic recycling endosome membrane. It is found in the cell membrane. The protein localises to the endoplasmic reticulum membrane. It localises to the golgi apparatus membrane. The enzyme catalyses L-cysteinyl-[protein] + hexadecanoyl-CoA = S-hexadecanoyl-L-cysteinyl-[protein] + CoA. The catalysed reaction is L-cysteinyl-[protein] + tetradecanoyl-CoA = S-tetradecanoyl-L-cysteinyl-[protein] + CoA. It catalyses the reaction L-cysteinyl-[protein] + octadecanoyl-CoA = S-octadecanoyl-L-cysteinyl-[protein] + CoA. Functionally, palmitoyltransferase that catalyzes the addition of palmitate onto various protein substrates and is involved in a variety of cellular processes. Has no stringent fatty acid selectivity and in addition to palmitate can also transfer onto target proteins myristate from tetradecanoyl-CoA and stearate from octadecanoyl-CoA. In the nervous system, plays a role in long term synaptic potentiation by palmitoylating AKAP5 through which it regulates protein trafficking from the dendritic recycling endosomes to the plasma membrane and controls both structural and functional plasticity at excitatory synapses. In dendrites, mediates the palmitoylation of DLG4 when synaptic activity decreases and induces synaptic clustering of DLG4 and associated AMPA-type glutamate receptors. Also mediates the de novo and turnover palmitoylation of RGS7BP, a shuttle for Gi/o-specific GTPase-activating proteins/GAPs, promoting its localization to the plasma membrane in response to the activation of G protein-coupled receptors. Through the localization of these GTPase-activating proteins/GAPs, it also probably plays a role in G protein-coupled receptors signaling in neurons. Also probably plays a role in cell adhesion by palmitoylating CD9 and CD151 to regulate their expression and function. Palmitoylates the endoplasmic reticulum protein CKAP4 and regulates its localization to the plasma membrane. Could also palmitoylate LCK and regulate its localization to the plasma membrane. The sequence is that of Palmitoyltransferase ZDHHC2 from Rattus norvegicus (Rat).